The sequence spans 277 residues: Small ribosomal subunit protein uS2 (277 aa).

The span at 228–241 (YEERLQAETDKDAE) shows a compositional bias: basic and acidic residues. The interval 228–277 (YEERLQAETDKDAESSTVQQEENPEADIPESIETKESVSAAADSDLDENE) is disordered.

It belongs to the universal ribosomal protein uS2 family.

The chain is Small ribosomal subunit protein uS2 from Syntrophus aciditrophicus (strain SB).